We begin with the raw amino-acid sequence, 224 residues long: 7-cyano-7-deazaguanine synthase (224 aa).

Residue 7-17 (LSGGLDSSTIL) participates in ATP binding. Positions 191, 199, 202, and 205 each coordinate Zn(2+).

It belongs to the QueC family. Requires Zn(2+) as cofactor.

It carries out the reaction 7-carboxy-7-deazaguanine + NH4(+) + ATP = 7-cyano-7-deazaguanine + ADP + phosphate + H2O + H(+). It participates in purine metabolism; 7-cyano-7-deazaguanine biosynthesis. Functionally, catalyzes the ATP-dependent conversion of 7-carboxy-7-deazaguanine (CDG) to 7-cyano-7-deazaguanine (preQ(0)). The chain is 7-cyano-7-deazaguanine synthase from Nostoc punctiforme (strain ATCC 29133 / PCC 73102).